The following is a 455-amino-acid chain: Notoamide E oxidase notB' (455 aa).

A helical transmembrane segment spans residues 11-31; it reads PAILSPADLTVIIVGLGIAGL. Residues E48 and G61 each coordinate FAD. N75 is a glycosylation site (N-linked (GlcNAc...) asparagine). An FAD-binding site is contributed by R121. Catalysis depends on residues R199 and Y229. FAD is bound by residues D324 and G337.

Belongs to the paxM FAD-dependent monooxygenase family. FAD is required as a cofactor.

It localises to the membrane. It catalyses the reaction notoamide E + NADPH + O2 + H(+) = notoamide C + NADP(+) + H2O. The catalysed reaction is notoamide E + NADPH + O2 + H(+) = notoamide D + NADP(+) + H2O. It participates in alkaloid biosynthesis. Functionally, FAD-dependent monooxygenase; part of the gene cluster that mediates the biosynthesis of notoamide, a fungal indole alkaloid that belongs to a family of natural products containing a characteristic bicyclo[2.2.2]diazaoctane core. The first step of notoamide biosynthesis involves coupling of L-proline and L-tryptophan by the bimodular NRPS notE', to produce cyclo-L-tryptophan-L-proline called brevianamide F. The reverse prenyltransferase notF' then acts as a deoxybrevianamide E synthase and converts brevianamide F to deoxybrevianamide E via reverse prenylation at C-2 of the indole ring leading to the bicyclo[2.2.2]diazaoctane core. Deoxybrevianamide E is further hydroxylated at C-6 of the indole ring, likely catalyzed by the cytochrome P450 monooxygenase notG', to yield 6-hydroxy-deoxybrevianamide E. 6-hydroxy-deoxybrevianamide E is a specific substrate of the prenyltransferase notC' for normal prenylation at C-7 to produce 6-hydroxy-7-prenyl-deoxybrevianamide, also called notoamide S. As the proposed pivotal branching point in notoamide biosynthesis, notoamide S can be diverted to notoamide E through an oxidative pyran ring closure putatively catalyzed by either notH' cytochrome P450 monooxygenase or the notD' FAD-linked oxidoreductase. This step would be followed by an indole 2,3-epoxidation-initiated pinacol-like rearrangement catalyzed by the notB' FAD-dependent monooxygenase leading to the formation of notoamide C and notoamide D. On the other hand notoamide S is converted to notoamide T by notH' (or notD'), a bifunctional oxidase that also functions as the intramolecular Diels-Alderase responsible for generation of (-)-notoamide T. To generate antipodal (+)-notoaminide T, notH (or notD) in Aspergillus strain MF297-2 is expected to catalyze a Diels-Alder reaction leading to the opposite stereochemistry. The remaining oxidoreductase notD' (or notH') likely catalyzes the oxidative pyran ring formation to yield (-)-stephacidin A. The FAD-dependent monooxygenase notI' is highly similar to notB' and is predicted to catalyze a similar conversion from (-)-stephacidin A to (+)-notoamide B via the 2,3-epoxidation of (-)-stephacidin A followed by a pinacol-type rearrangement. Finally, it remains unclear which enzyme could be responsible for the final hydroxylation steps leading to notoamide A and sclerotiamide. The chain is Notoamide E oxidase notB' from Aspergillus versicolor.